A 256-amino-acid polypeptide reads, in one-letter code: MEAALGLLRRMPPKQSETALSALLSLIPQHSSDLLSQVDLPLQVLRDIESGKDFILCEYNRDADSYRSPWSNKYLPPLEDALYPSSELRKLEVEANDIFAIYRDQYYEGGISSVYMWEDDNEGFVACFLIKKDGSKSGHGRRGCLEEGAWDAIHVIQVGSEEEEMAQYCLTSTIMLSLTTDDESSGKFGLSGSIRRQMKMELAVADGHLCNMGRMIEELEGKLRNSLDQVYFGKTREMVCTLRPPAEIVQMRLPDT.

Met-1 carries the N-acetylmethionine modification.

It belongs to the F-actin-capping protein beta subunit family. Component of the F-actin capping complex, composed of a heterodimer of an alpha and a beta subunit.

It is found in the cytoplasm. The protein resides in the cytoskeleton. F-actin-capping proteins bind in a Ca(2+)-independent manner to the fast growing ends of actin filaments (barbed end) thereby blocking the exchange of subunits at these ends. Unlike other capping proteins (such as gelsolin and severin), these proteins do not sever actin filaments. The protein is F-actin-capping protein subunit beta of Arabidopsis thaliana (Mouse-ear cress).